The sequence spans 425 residues: Glutamyl-tRNA reductase (425 aa).

Substrate is bound by residues 49 to 52 (TCNR), S107, 112 to 114 (EPQ), and Q118. Residue C50 is the Nucleophile of the active site. 187–192 (GAGETI) provides a ligand contact to NADP(+).

This sequence belongs to the glutamyl-tRNA reductase family. As to quaternary structure, homodimer.

The catalysed reaction is (S)-4-amino-5-oxopentanoate + tRNA(Glu) + NADP(+) = L-glutamyl-tRNA(Glu) + NADPH + H(+). The protein operates within porphyrin-containing compound metabolism; protoporphyrin-IX biosynthesis; 5-aminolevulinate from L-glutamyl-tRNA(Glu): step 1/2. In terms of biological role, catalyzes the NADPH-dependent reduction of glutamyl-tRNA(Glu) to glutamate 1-semialdehyde (GSA). The protein is Glutamyl-tRNA reductase of Pseudomonas putida (strain ATCC 47054 / DSM 6125 / CFBP 8728 / NCIMB 11950 / KT2440).